An 847-amino-acid chain; its full sequence is MFRCWSAILILGFIFLASEGRPTKESGYGLKSYQPLTRLRHKQEKSQESSRIKEFLIHDGPFGSCENKYCGLGRHCVINRETRHAECACMDLCKQHYKPVCGSDGEFYENHCEVHRAACLKKQKITIVHNEDCFFEGDNCMAIEYSKMKSMLLDLQNQKYITQENENPNSDDISRKKPLVDQMFKYFDADSNGLVDINELTQVIKQEELNKDLSDCTLYDLLKYDDFNADKHLALEEFYRAFQVIQLSLPEDQRVSITAATVGQSAVLSCAIVGTLRPPIIWKRNNIVLNNLDLEDINDFGDDGSLYITKVTTVHMGNYTCYADGYENVRQTHIFQVNVPPVIRVYPESQAREPGVTASLRCHAEGIPDPQLGWLKNGIDITPKLSKQLTLQANGSEVHISNVRYEDTGAYTCIARNEAGVDEDISSLFVEDSARKTLANILWREEGLGIGNMFYVFYEDGIKVIQPTECEFQRHIKPSEKLLGYQDEVCPKAEEDEVQRCVWASAVNVKDKFIYVAQPTLDRILIVDVQSQKVVQAVSTDPVPVKLHYDKSHDQVWVLSWGSMEKTSPTLQVITLASGNVPHHTIHTQPVGKQFDRVDDFFIPTPTLIITHMRFGFILHKDESALHKIDLETMSYIKTINLKDSRCIPLSLAYTHLGGYYFISCKADITGATPPQLVVDSVTDSIIGFNSDVTGTPYVSPDGHYLVSVNDVKGLVRVQYITIRGEILDAFDIHTNLHISDLAFQPSFTEAHQYNIYGSSSQQTDVLFVELSSGKVKMIKSLKEPLKTEDWPWSQKNRHIQGSGLFGQYLMTPSKDSLFILDGRLNKLNCEITEVQKGNTVVWVGDA.

The N-terminal stretch at 1–20 (MFRCWSAILILGFIFLASEG) is a signal peptide. The Kazal-like domain maps to 81–135 (ETRHAECACMDLCKQHYKPVCGSDGEFYENHCEVHRAACLKKQKITIVHNEDCFF). 3 cysteine pairs are disulfide-bonded: cysteine 87-cysteine 119, cysteine 93-cysteine 112, and cysteine 101-cysteine 133. EF-hand domains are found at residues 175 to 210 (RKKP…EELN) and 211 to 246 (KDLS…QVIQ). The Ca(2+) site is built by aspartate 188, aspartate 190, asparagine 192, glutamate 199, aspartate 226, asparagine 228, aspartate 230, histidine 232, and glutamate 237. Ig-like domains are found at residues 250–338 (PEDQ…FQVN) and 341–426 (PVIR…EDIS). Intrachain disulfides connect cysteine 270–cysteine 321 and cysteine 362–cysteine 413. 2 N-linked (GlcNAc...) asparagine glycosylation sites follow: asparagine 318 and asparagine 394.

The protein resides in the secreted. This Mus musculus (Mouse) protein is Follistatin-related protein 5 (Fstl5).